We begin with the raw amino-acid sequence, 146 residues long: Hemoglobin subunit beta (146 aa).

Residues 2–146 enclose the Globin domain; it reads HWSAEEKQLI…VAHALARKYH (145 aa). Residues His-63 and His-92 each coordinate heme b.

Belongs to the globin family. In terms of assembly, heterotetramer of two alpha chains and two beta chains. Red blood cells.

Functionally, involved in oxygen transport from the lung to the various peripheral tissues. The polypeptide is Hemoglobin subunit beta (HBB) (Psittacula krameri (Rose-ringed parakeet)).